Here is a 236-residue protein sequence, read N- to C-terminus: Alpha-acetolactate decarboxylase (236 aa).

This sequence belongs to the alpha-acetolactate decarboxylase family.

It catalyses the reaction (2S)-2-acetolactate + H(+) = (R)-acetoin + CO2. It functions in the pathway polyol metabolism; (R,R)-butane-2,3-diol biosynthesis; (R,R)-butane-2,3-diol from pyruvate: step 2/3. Its function is as follows. Converts acetolactate into acetoin. The polypeptide is Alpha-acetolactate decarboxylase (aldB) (Lactococcus lactis subsp. lactis (strain IL1403) (Streptococcus lactis)).